The chain runs to 388 residues: MTQHQDAIAPHGGSLINRVASETQKQDLLAKGDSLPRVQLDKRATSDLEMIAIGGFSPLSGFMGQADYEQVVHHMHLDNGLPWSIPVTLSVDEGVADSLNVGDLVRLDDPTGAFVGVLELTEKYTYDKTQEAVQVYKTDEMKHPGVKVVFEQGAVNLAGPVWLLERQAHPQFPSYQIDPAASRQLFRERGWNTIVGFQTRNPIHRAHEYIQKCALETVDGLFLHPLVGATKSDDIPADVRMRCYEIMMEHYFPEDRVILAINPAAMRYAGPREAIFHALVRKNYGCTHFIVGRDHAGVGDYYGTYDAQHIFDTLDAQALGITPMKFEHAFYCKKTLSMATTKTSPSGPEDRVHLSGTKVREMLRRGELPPPEFSRPEVASELAAAMKA.

It belongs to the sulfate adenylyltransferase family.

It carries out the reaction sulfate + ATP + H(+) = adenosine 5'-phosphosulfate + diphosphate. It participates in sulfur metabolism; hydrogen sulfide biosynthesis; sulfite from sulfate: step 1/3. This Acaryochloris marina (strain MBIC 11017) protein is Sulfate adenylyltransferase.